Reading from the N-terminus, the 637-residue chain is 3D-(3,5/4)-trihydroxycyclohexane-1,2-dione hydrolase (637 aa).

Glu66 is a binding site for thiamine diphosphate. The segment at 442–522 (SLPGDLQRLW…INVLLFDNSG (81 aa)) is thiamine pyrophosphate binding. Positions 493 and 520 each coordinate Mg(2+).

This sequence belongs to the TPP enzyme family. The cofactor is Mg(2+). Thiamine diphosphate is required as a cofactor.

It carries out the reaction 3D-3,5/4-trihydroxycyclohexane-1,2-dione + H2O = 5-deoxy-D-glucuronate + H(+). It participates in polyol metabolism; myo-inositol degradation into acetyl-CoA; acetyl-CoA from myo-inositol: step 3/7. Involved in the cleavage of the C1-C2 bond of 3D-(3,5/4)-trihydroxycyclohexane-1,2-dione (THcHDO) to yield 5-deoxy-glucuronate (5DG). In Bacillus licheniformis (strain ATCC 14580 / DSM 13 / JCM 2505 / CCUG 7422 / NBRC 12200 / NCIMB 9375 / NCTC 10341 / NRRL NRS-1264 / Gibson 46), this protein is 3D-(3,5/4)-trihydroxycyclohexane-1,2-dione hydrolase.